A 134-amino-acid chain; its full sequence is Phosphoribosyl-AMP cyclohydrolase (134 aa).

Residue Asp-80 participates in Mg(2+) binding. Residue Cys-81 participates in Zn(2+) binding. Mg(2+)-binding residues include Asp-82 and Asp-84. Residues Cys-98 and Cys-105 each coordinate Zn(2+).

It belongs to the PRA-CH family. In terms of assembly, homodimer. It depends on Mg(2+) as a cofactor. Zn(2+) is required as a cofactor.

It is found in the cytoplasm. It catalyses the reaction 1-(5-phospho-beta-D-ribosyl)-5'-AMP + H2O = 1-(5-phospho-beta-D-ribosyl)-5-[(5-phospho-beta-D-ribosylamino)methylideneamino]imidazole-4-carboxamide. Its pathway is amino-acid biosynthesis; L-histidine biosynthesis; L-histidine from 5-phospho-alpha-D-ribose 1-diphosphate: step 3/9. In terms of biological role, catalyzes the hydrolysis of the adenine ring of phosphoribosyl-AMP. This chain is Phosphoribosyl-AMP cyclohydrolase, found in Herminiimonas arsenicoxydans.